Consider the following 283-residue polypeptide: MFIKLDGTKLSQKLKEDLAKKVNNQKIKILIIISDPSEASRIYVRNKINYCDSLGIQTEVYDLSKIDDTNQFIVEMNQKISLSNPNGVLVQLPIKERLDTNKIIENIPIRLDVDAFLYHRFDQDQKEKVIPCVLNAVLELFKEYQLSFLDKKILLIGNGITSNQPIVNYLNEHQIKFDLITKENSQLLEEKTKVADLVISAVGKAKFLANYQFKRGVIFIDIGIDKYFDPEQSKYLICGDFDYDKLKEIASYGTPTPGGIGPLTIYSLVKNLINLSEIQKVNK.

NADP(+) contacts are provided by residues Gly157–Gly159 and Ile224.

It belongs to the tetrahydrofolate dehydrogenase/cyclohydrolase family. As to quaternary structure, homodimer.

The enzyme catalyses (6R)-5,10-methylene-5,6,7,8-tetrahydrofolate + NADP(+) = (6R)-5,10-methenyltetrahydrofolate + NADPH. It carries out the reaction (6R)-5,10-methenyltetrahydrofolate + H2O = (6R)-10-formyltetrahydrofolate + H(+). Its pathway is one-carbon metabolism; tetrahydrofolate interconversion. Functionally, catalyzes the oxidation of 5,10-methylenetetrahydrofolate to 5,10-methenyltetrahydrofolate and then the hydrolysis of 5,10-methenyltetrahydrofolate to 10-formyltetrahydrofolate. This chain is Bifunctional protein FolD, found in Mycoplasmoides gallisepticum (strain R(low / passage 15 / clone 2)) (Mycoplasma gallisepticum).